Consider the following 705-residue polypeptide: Solute carrier family 12 member 8 (705 aa).

11 helical membrane-spanning segments follow: residues 38–58 (FGTW…VVLF), 69–89 (GVLL…ITVL), 92–112 (IGVA…ISSV), 121–141 (VGLL…TGFA), 159–179 (ISVA…KWII), 181–201 (LQLL…VGSF), 232–252 (FFTV…GFNM), 268–288 (LAAV…LGAV), 306–326 (LVGF…CMGG), 368–388 (LVTM…VVTI), and 390–410 (FMLT…AHCG). The segment at 472-512 (ESRQLGSREGNNPKNQKRKGKKGAKQTLQDSFLLDPGSPLS) is disordered. Basic residues predominate over residues 486 to 495 (NQKRKGKKGA). A run of 2 helical transmembrane segments spans residues 587-607 (WVSL…QWLY) and 612-632 (MGVA…LYLG).

The protein belongs to the SLC12A transporter family.

The protein resides in the membrane. Functionally, cation/chloride cotransporter that may play a role in the control of keratinocyte proliferation. This is Solute carrier family 12 member 8 (Slc12a8) from Mus musculus (Mouse).